The primary structure comprises 463 residues: Abscisic acid 8'-hydroxylase 3 (463 aa).

The helical transmembrane segment at 6 to 26 threads the bilayer; it reads LFLTLSAAALFLCLLRFIAGV. Cys411 serves as a coordination point for heme.

It belongs to the cytochrome P450 family. Heme serves as cofactor. In terms of tissue distribution, mainly expressed in flower buds, flowers, rosette leaves and roots. Lower expression in mature siliques and inflorescence stems. Not expressed in dry seeds.

The protein resides in the membrane. The catalysed reaction is 2-cis-(+)-abscisate + reduced [NADPH--hemoprotein reductase] + O2 = (+)-8'-hydroxyabscisate + oxidized [NADPH--hemoprotein reductase] + H2O + H(+). It functions in the pathway plant hormone degradation; abscisic acid degradation. Its activity is regulated as follows. Inhibited by tetcyclcis, but not by metyrapone. Its function is as follows. Involved in the oxidative degradation of abscisic acid, but not in the isomerization of the produced 8'-hydroxyabscisic acid (8'-OH-ABA) to (-)-phaseic acid (PA). Involved in the control of postgermination growth. The sequence is that of Abscisic acid 8'-hydroxylase 3 (CYP707A3) from Arabidopsis thaliana (Mouse-ear cress).